The following is a 1413-amino-acid chain: Zinc finger protein 609 (1413 aa).

5 disordered regions span residues 1 to 26 (MSLSSGACGGKGVDANPVETYDSGDE), 47 to 196 (QKLE…GRGS), 354 to 484 (RFCD…EPTL), 517 to 659 (AHAH…RPIA), and 695 to 765 (PNSP…AAGD). Phosphoserine occurs at positions 358, 361, and 379. Threonine 381 carries the phosphothreonine modification. Residues 386-405 (AAAASDSKGTSSSSKTRAGA) are compositionally biased toward low complexity. 6 positions are modified to phosphoserine: serine 413, serine 433, serine 446, serine 452, serine 467, and serine 470. Polar residues predominate over residues 423–437 (ASSTSEDVKASPSSA). A Glycyl lysine isopeptide (Lys-Gly) (interchain with G-Cter in SUMO2) cross-link involves residue lysine 479. The C2H2-type zinc finger occupies 495 to 520 (IDCPHPNCNKKYKHINGLKYHQAHAH). Basic and acidic residues predominate over residues 519-529 (AHTDDDSKPEA). Phosphoserine is present on residues serine 533, serine 575, and serine 577. Residues 625–648 (SLERKCMEKEKCKKPSSLKSEKIP) are compositionally biased toward basic and acidic residues. The span at 725 to 735 (DKKKKDKKKKD) shows a compositional bias: basic residues. Serine 742 is modified (phosphoserine). A Phosphothreonine modification is found at threonine 745. Basic and acidic residues predominate over residues 750–763 (CRAEEGKSPFRDAA). A Phosphoserine modification is found at serine 757. Lysine 788 participates in a covalent cross-link: Glycyl lysine isopeptide (Lys-Gly) (interchain with G-Cter in SUMO2). Positions 797 to 843 (FTDNAPSPSIGGSSRLDSTTPTQPLTPLHVVTQNGAEASSVKTNSPA) are enriched in polar residues. Disordered regions lie at residues 797 to 962 (FTDN…VIQQ), 1004 to 1127 (YEEQ…RQAE), 1154 to 1221 (IKSE…SPLT), and 1273 to 1369 (SKVS…STHH). Position 803 is a phosphoserine (serine 803). Residue threonine 822 is modified to Phosphothreonine. A phosphoserine mark is found at serine 841, serine 845, and serine 848. The segment covering 854–875 (GEGKVDSAKSKDPEQLVKEGAK) has biased composition (basic and acidic residues). Positions 902-916 (YAQSSPGTLTSSSQA) are enriched in polar residues. Basic and acidic residues predominate over residues 925–949 (TKKDEEPESVEGKVKNDVCEEKKPE). The segment covering 950 to 962 (LSNSSQQPSVIQQ) has biased composition (polar residues). The segment covering 1022 to 1044 (GLDKKTEMGLKEREASLKEEWKQ) has biased composition (basic and acidic residues). Serine 1057 is subject to Phosphoserine. Lysine 1063 participates in a covalent cross-link: Glycyl lysine isopeptide (Lys-Gly) (interchain with G-Cter in SUMO2). Basic and acidic residues-rich tracts occupy residues 1099–1115 (LKGKLGEASHLGKEASE), 1154–1189 (IKSEDDRWKEERDRKLKEDRSRSKDSVPKEDGKEST), and 1197–1210 (PSEESRLGSKEPRP). A Glycyl lysine isopeptide (Lys-Gly) (interchain with G-Cter in SUMO2) cross-link involves residue lysine 1155. A compositionally biased stretch (polar residues) spans 1288–1298 (PSVSCKASSES). Lysine 1299 participates in a covalent cross-link: Glycyl lysine isopeptide (Lys-Gly) (interchain with G-Cter in SUMO2). A compositionally biased stretch (gly residues) spans 1330–1348 (GCGVVGGGGSCGSVAGAGG).

As to quaternary structure, interacts (via N-terminus) with NIPBL. Interacts with the multiprotein complex Integrator. Expressed in myoblasts. Expressed in neurons in various brain regions, including striatum, prefrontal cortex, olfactory bulb, midbrain, cerebellum and hippocampus. Expressed in neural stem cells (at protein level). Expressed in thymocytes.

The protein localises to the nucleus. Functionally, transcription factor, which activates RAG1, and possibly RAG2, transcription. Through the regulation of RAG1/2 expression, may regulate thymocyte maturation. Along with NIPBL and the multiprotein complex Integrator, promotes cortical neuron migration during brain development by regulating the transcription of crucial genes in this process. Preferentially binds promoters containing paused RNA polymerase II. Up-regulates the expression of SEMA3A, NRP1, PLXND1 and GABBR2 genes, among others. Involved in regulation of myoblast proliferation during myogenesis. This Mus musculus (Mouse) protein is Zinc finger protein 609 (Znf609).